The sequence spans 70 residues: Large ribosomal subunit protein bL31 (70 aa).

Zn(2+)-binding residues include Cys16, Cys18, Cys38, and Cys41.

This sequence belongs to the bacterial ribosomal protein bL31 family. Type A subfamily. As to quaternary structure, part of the 50S ribosomal subunit. Requires Zn(2+) as cofactor.

Binds the 23S rRNA. The sequence is that of Large ribosomal subunit protein bL31 from Vesicomyosocius okutanii subsp. Calyptogena okutanii (strain HA).